A 1028-amino-acid chain; its full sequence is Formate dehydrogenase major subunit (1028 aa).

A signal peptide (tat-type signal) is located at residues 1–33 (MQVSRRKFFKICAGGMAGTSAAMLGFAPANVLA). The region spanning 43–114 (AFESRNTCTY…GSLDYVNSES (72 aa)) is the 4Fe-4S Mo/W bis-MGD-type domain. Cys-50, Cys-53, Cys-57, and Cys-100 together coordinate [4Fe-4S] cluster. Residue Sec-204 is a non-standard amino acid, selenocysteine.

It belongs to the prokaryotic molybdopterin-containing oxidoreductase family. As to quaternary structure, formate dehydrogenase is a membrane-bound complex, formed by subunits alpha, beta and gamma. It depends on Mo-bis(molybdopterin guanine dinucleotide) as a cofactor. [4Fe-4S] cluster serves as cofactor. Post-translationally, predicted to be exported by the Tat system. The position of the signal peptide cleavage has not been experimentally proven.

It is found in the periplasm. The enzyme catalyses formate + NAD(+) = CO2 + NADH. Allows to use formate as major electron donor during anaerobic respiration. Subunit alpha possibly forms the active site. The sequence is that of Formate dehydrogenase major subunit (fdxG) from Haemophilus influenzae (strain ATCC 51907 / DSM 11121 / KW20 / Rd).